The following is a 48-amino-acid chain: uncharacterized protein (48 aa).

It belongs to the ELIP/psbS family.

Its subcellular location is the plastid. It is found in the chloroplast. Possible role in chlorophyll and/or carotenoid binding. This is an uncharacterized protein from Porphyra purpurea (Red seaweed).